The primary structure comprises 143 residues: AP-4 complex subunit sigma (143 aa).

This sequence belongs to the adaptor complexes small subunit family. As to quaternary structure, adaptor protein complex 4 (AP-4) is a heterotetramer composed of two large adaptins (epsilon-type subunit and beta-type subunit), a medium adaptin (mu-type subunit) and a small adaptin (sigma-type subunit). Interacts with EHD2.

The protein localises to the golgi apparatus. It localises to the trans-Golgi network. The protein resides in the membrane. Its subcellular location is the coated pit. Subunit of novel type of clathrin- or non-clathrin-associated protein coat involved in targeting proteins from the trans-Golgi network (TGN) to the endosomal-lysosomal system. The chain is AP-4 complex subunit sigma from Arabidopsis thaliana (Mouse-ear cress).